The sequence spans 418 residues: Tyrosine--tRNA ligase (418 aa).

An L-tyrosine-binding site is contributed by tyrosine 34. Residues 39-48 (PTADSLHLGH) carry the 'HIGH' region motif. The L-tyrosine site is built by tyrosine 169 and glutamine 173. The 'KMSKS' region signature appears at 229 to 233 (KFGKS). Lysine 232 is an ATP binding site. The region spanning 352–418 (HNIVEILVAA…GKKKYAVLTY (67 aa)) is the S4 RNA-binding domain.

The protein belongs to the class-I aminoacyl-tRNA synthetase family. TyrS type 1 subfamily. As to quaternary structure, homodimer.

Its subcellular location is the cytoplasm. The catalysed reaction is tRNA(Tyr) + L-tyrosine + ATP = L-tyrosyl-tRNA(Tyr) + AMP + diphosphate + H(+). Functionally, catalyzes the attachment of tyrosine to tRNA(Tyr) in a two-step reaction: tyrosine is first activated by ATP to form Tyr-AMP and then transferred to the acceptor end of tRNA(Tyr). In Streptococcus pyogenes serotype M1, this protein is Tyrosine--tRNA ligase.